The chain runs to 1131 residues: Filamin A-interacting protein 1-like (1131 aa).

Positions 1-62 are disordered; that stretch reads MRSRSSNAEG…KSHTGKGHHT (62 aa). Residues 50–62 are compositionally biased toward basic and acidic residues; sequence VSEKSHTGKGHHT. Coiled-coil stretches lie at residues 139–583 and 610–780; these read NELD…LSKV and SKST…KSLR. Ser789 is modified (phosphoserine). A phosphothreonine mark is found at Thr984 and Thr992. Phosphoserine is present on Ser1050.

This sequence belongs to the FILIP1 family.

The protein localises to the cytoplasm. Its subcellular location is the membrane. The protein resides in the nucleus. Acts as a regulator of the antiangiogenic activity on endothelial cells. When overexpressed in endothelial cells, leads to inhibition of cell proliferation and migration and an increase in apoptosis. Inhibits melanoma growth When expressed in tumor-associated vasculature. This Mus musculus (Mouse) protein is Filamin A-interacting protein 1-like (Filip1l).